Consider the following 217-residue polypeptide: N-(5'-phosphoribosyl)anthranilate isomerase (217 aa).

It belongs to the TrpF family.

The enzyme catalyses N-(5-phospho-beta-D-ribosyl)anthranilate = 1-(2-carboxyphenylamino)-1-deoxy-D-ribulose 5-phosphate. Its pathway is amino-acid biosynthesis; L-tryptophan biosynthesis; L-tryptophan from chorismate: step 3/5. The chain is N-(5'-phosphoribosyl)anthranilate isomerase from Chlorobium phaeobacteroides (strain BS1).